A 715-amino-acid chain; its full sequence is MKFKKKNYTSQVDEMDCGCAALSMILKSYGTEKSLASLRLLAGTTIEGTSALGIKKAAEILEFSVQALRTDASLFEMKNAPYPFIAHVIKDQKYPHYYVITGANKNSVFIADPDPTIKMTKLSKEAFLSEWTGISLFLSTTPSYHPTKEKASSLLSFIPIITRQKKVILNIVIASFIVTLINILGSYYLQSMIDSYIPNALMGTLGIISVGLLLTYIIQQVLEFAKAFLLNVLSQRLAIDVILSYIRHIFQLPMSFFSTRRTGEITSRFSDASSILDAIASTILSLFLDLTIVVMTGLILGLQNMQLFLLVLLAIPLYIVVIIIFTPLFEKQNHEVMQTNAVLNSSIIEDINGIETIKALASEQERYQKIDYEFASYLKKAFTLQKSEAIQGLIKAIIQLTLSVTILWFGATLVISQKITLGQLITFNALLSYFTNPITNIINLQTKLQKARVANERLNEVYLVPSEFEEKKTELSLSHFNLNMSDISYQYGFGRKVLSEIELSIKENEKLTIVGMSGSGKSTLVKLLVNFFQPTSGTITLGGIDLQQFDKHQLRRLINYLPQQPYIFTGSILDNLLLGANENASQEEILKAVELAEIRADIEQMQLGYQTELSSDASSLSGGQKQRIALARALLSPAKILILDEATSNLDMITEKKILKNLLPLDKTIIFIAHRLSVAEMSHRIIVVDQGKVIESGSHVDLLAQNGFYEQLYHN.

The 128-residue stretch at 11 to 138 (QVDEMDCGCA…SEWTGISLFL (128 aa)) folds into the Peptidase C39 domain. C17 is a catalytic residue. 6 helical membrane-spanning segments follow: residues 167 to 187 (VILNIVIASFIVTLINILGSY), 197 to 217 (IPNALMGTLGIISVGLLLTYI), 237 to 257 (LAIDVILSYIRHIFQLPMSFF), 282 to 302 (TILSLFLDLTIVVMTGLILGL), 307 to 327 (LFLLVLLAIPLYIVVIIIFTP), and 396 to 416 (AIIQLTLSVTILWFGATLVIS). Residues 168–450 (ILNIVIASFI…IINLQTKLQK (283 aa)) enclose the ABC transmembrane type-1 domain. An ABC transporter domain is found at 482–715 (LNMSDISYQY…NGFYEQLYHN (234 aa)). 515 to 522 (GMSGSGKS) provides a ligand contact to ATP.

It belongs to the ABC transporter superfamily. Bacteriocin (lactococcin) exporter (TC 3.A.1.112.3) family.

It localises to the cell membrane. In terms of biological role, involved in the export process of the bacteriocin lactococcin A. The chain is Lactococcin-A transport/processing ATP-binding protein LcnC (lcnC) from Lactococcus lactis subsp. lactis (Streptococcus lactis).